Here is an 80-residue protein sequence, read N- to C-terminus: Cell division protein ZapB (80 aa).

Residues 3–80 (FEVLEKLEAK…SLLGKMEDVE (78 aa)) adopt a coiled-coil conformation.

This sequence belongs to the ZapB family. Homodimer. The ends of the coiled-coil dimer bind to each other, forming polymers. Interacts with FtsZ.

The protein resides in the cytoplasm. Its function is as follows. Non-essential, abundant cell division factor that is required for proper Z-ring formation. It is recruited early to the divisome by direct interaction with FtsZ, stimulating Z-ring assembly and thereby promoting cell division earlier in the cell cycle. Its recruitment to the Z-ring requires functional FtsA or ZipA. This chain is Cell division protein ZapB, found in Vibrio cholerae serotype O1 (strain ATCC 39541 / Classical Ogawa 395 / O395).